The chain runs to 185 residues: Small ribosomal subunit protein uS4 (185 aa).

Residues 107 to 179 enclose the S4 RNA-binding domain; that stretch reads RRLQTLVYRK…NGRRKRKNNH (73 aa). Positions 161-185 are disordered; it reads NTPLTNPEINGRRKRKNNHAGKEDN.

Belongs to the universal ribosomal protein uS4 family.

In Entamoeba histolytica (strain ATCC 30459 / HM-1:IMSS / ABRM), this protein is Small ribosomal subunit protein uS4.